The primary structure comprises 303 residues: Signal recognition particle receptor FtsY (303 aa).

Residues 108-115 (GVNGAGKT), 190-194 (DTAGR), and 254-257 (TKLD) each bind GTP.

The protein belongs to the GTP-binding SRP family. FtsY subfamily. Part of the signal recognition particle protein translocation system, which is composed of SRP and FtsY. SRP is a ribonucleoprotein composed of Ffh and a 4.5S RNA molecule.

The protein resides in the cell inner membrane. Its subcellular location is the cytoplasm. The catalysed reaction is GTP + H2O = GDP + phosphate + H(+). Functionally, involved in targeting and insertion of nascent membrane proteins into the cytoplasmic membrane. Acts as a receptor for the complex formed by the signal recognition particle (SRP) and the ribosome-nascent chain (RNC). Interaction with SRP-RNC leads to the transfer of the RNC complex to the Sec translocase for insertion into the membrane, the hydrolysis of GTP by both Ffh and FtsY, and the dissociation of the SRP-FtsY complex into the individual components. The sequence is that of Signal recognition particle receptor FtsY from Rickettsia felis (strain ATCC VR-1525 / URRWXCal2) (Rickettsia azadi).